A 711-amino-acid chain; its full sequence is GDNF-inducible zinc finger protein 1 (711 aa).

Residues 31 to 103 (CDVTVSVEYQ…VYTAKVQVEE (73 aa)) form the BTB domain. Positions 153 to 168 (SGSQVSAAPAPRASVA) are enriched in low complexity. Disordered stretches follow at residues 153–220 (SGSQ…PKIR) and 243–312 (RLRE…EGEK). Basic and acidic residues-rich tracts occupy residues 197-212 (PPKKSKDKLDKKKEVV), 243-252 (RLREQQKTAE), and 265-277 (SPDRVGTEMEQVS). The span at 298–309 (EEEEEEEEEDEE) shows a compositional bias: acidic residues. 10 C2H2-type zinc fingers span residues 317 to 340 (FKCSICEKAFLYEKSFLKHSKHRH), 348 to 371 (YRCDTCGQTFANRCNLKSHQRHVH), 377 to 400 (FPCELCGKKFKRKKDVKRHVLQVH), 407 to 429 (HRCGQCGKGLSSKTALRLHERTH), 435 to 457 (YGCTECGARFSQPSALKTHMRIH), 463 to 485 (FVCDECGARFTQNHMLIYHKRCH), 491 to 513 (FMCETCGKSFASKEYLKHHNRIH), 519 to 541 (FKCEVCFRTFAQRNSLYQHIKVH), 547 to 569 (YCCDQCGKQFTQLNALQRHRRIH), and 575 to 597 (FMCNACGRTFTDKSTLRRHTSIH). Position 613 is a phosphoserine (Ser613).

It belongs to the krueppel C2H2-type zinc-finger protein family. Interacts with NCL. In terms of tissue distribution, expressed in adult brain, heart, skeletal muscle, kidney and liver. Also detected in fetal brain and kidney, and at lower levels in fetal lung and liver.

It localises to the cytoplasm. The protein localises to the nucleus. The protein resides in the nucleoplasm. It is found in the nucleolus. Its function is as follows. Transcriptional repressor that binds the GZF1 responsive element (GRE) (consensus: 5'-TGCGCN[TG][CA]TATA-3'). May be regulating VSX2/HOX10 expression. This Homo sapiens (Human) protein is GDNF-inducible zinc finger protein 1.